The following is a 365-amino-acid chain: Peptide chain release factor 2 (365 aa).

Position 252 is an N5-methylglutamine (Gln-252).

This sequence belongs to the prokaryotic/mitochondrial release factor family. In terms of processing, methylated by PrmC. Methylation increases the termination efficiency of RF2.

It is found in the cytoplasm. Its function is as follows. Peptide chain release factor 2 directs the termination of translation in response to the peptide chain termination codons UGA and UAA. This chain is Peptide chain release factor 2, found in Yersinia enterocolitica serotype O:8 / biotype 1B (strain NCTC 13174 / 8081).